Reading from the N-terminus, the 317-residue chain is Ribosomal RNA small subunit methyltransferase A (317 aa).

6 residues coordinate S-adenosyl-L-methionine: Asn-37, Val-39, Gly-64, Glu-85, Asp-115, and Asn-134. The interval 293–317 is disordered; it reads GGSDEATSTGRDARAPDISGHASAS.

It belongs to the class I-like SAM-binding methyltransferase superfamily. rRNA adenine N(6)-methyltransferase family. RsmA subfamily.

The protein resides in the cytoplasm. The catalysed reaction is adenosine(1518)/adenosine(1519) in 16S rRNA + 4 S-adenosyl-L-methionine = N(6)-dimethyladenosine(1518)/N(6)-dimethyladenosine(1519) in 16S rRNA + 4 S-adenosyl-L-homocysteine + 4 H(+). Functionally, specifically dimethylates two adjacent adenosines (A1518 and A1519) in the loop of a conserved hairpin near the 3'-end of 16S rRNA in the 30S particle. May play a critical role in biogenesis of 30S subunits. This is Ribosomal RNA small subunit methyltransferase A from Mycobacterium bovis (strain BCG / Tokyo 172 / ATCC 35737 / TMC 1019).